Reading from the N-terminus, the 539-residue chain is Glucose-6-phosphate isomerase (539 aa).

The Proton donor role is filled by Glu-349. Residues His-380 and Lys-508 contribute to the active site.

The protein belongs to the GPI family.

The protein resides in the cytoplasm. It catalyses the reaction alpha-D-glucose 6-phosphate = beta-D-fructose 6-phosphate. It participates in carbohydrate biosynthesis; gluconeogenesis. The protein operates within carbohydrate degradation; glycolysis; D-glyceraldehyde 3-phosphate and glycerone phosphate from D-glucose: step 2/4. Catalyzes the reversible isomerization of glucose-6-phosphate to fructose-6-phosphate. The sequence is that of Glucose-6-phosphate isomerase from Caulobacter sp. (strain K31).